Reading from the N-terminus, the 298-residue chain is GTPase Era (298 aa).

In terms of domain architecture, Era-type G spans 8 to 176 (HCGSVAVIGR…VRDVLALLPE (169 aa)). The segment at 16 to 23 (GRPNVGKS) is G1. 16-23 (GRPNVGKS) lines the GTP pocket. The tract at residues 42 to 46 (QTTRH) is G2. Residues 63–66 (DTPG) form a G3 region. GTP-binding positions include 63–67 (DTPGL) and 125–128 (NKID). Residues 125-128 (NKID) form a G4 region. The tract at residues 155 to 157 (ISA) is G5. The KH type-2 domain occupies 199–283 (VREQLMRQLG…FLETWVRVRE (85 aa)).

This sequence belongs to the TRAFAC class TrmE-Era-EngA-EngB-Septin-like GTPase superfamily. Era GTPase family. Monomer.

It is found in the cytoplasm. The protein resides in the cell inner membrane. Its function is as follows. An essential GTPase that binds both GDP and GTP, with rapid nucleotide exchange. Plays a role in 16S rRNA processing and 30S ribosomal subunit biogenesis and possibly also in cell cycle regulation and energy metabolism. The polypeptide is GTPase Era (Stenotrophomonas maltophilia (strain R551-3)).